Consider the following 118-residue polypeptide: Large ribosomal subunit protein uL18 (118 aa).

The protein belongs to the universal ribosomal protein uL18 family. In terms of assembly, part of the 50S ribosomal subunit; part of the 5S rRNA/L5/L18/L25 subcomplex. Contacts the 5S and 23S rRNAs.

This is one of the proteins that bind and probably mediate the attachment of the 5S RNA into the large ribosomal subunit, where it forms part of the central protuberance. The protein is Large ribosomal subunit protein uL18 of Ralstonia pickettii (strain 12J).